The primary structure comprises 129 residues: UPF0102 protein Mrad2831_2938 (129 aa).

The protein belongs to the UPF0102 family.

In Methylobacterium radiotolerans (strain ATCC 27329 / DSM 1819 / JCM 2831 / NBRC 15690 / NCIMB 10815 / 0-1), this protein is UPF0102 protein Mrad2831_2938.